Reading from the N-terminus, the 229-residue chain is Cytidylate kinase (229 aa).

Position 12 to 20 (12 to 20) interacts with ATP; the sequence is GPSGTGKSS.

This sequence belongs to the cytidylate kinase family. Type 1 subfamily.

The protein resides in the cytoplasm. It catalyses the reaction CMP + ATP = CDP + ADP. It carries out the reaction dCMP + ATP = dCDP + ADP. The protein is Cytidylate kinase of Rhodococcus jostii (strain RHA1).